The chain runs to 38 residues: Large ribosomal subunit protein bL36 (38 aa).

It belongs to the bacterial ribosomal protein bL36 family.

The polypeptide is Large ribosomal subunit protein bL36 (Hamiltonella defensa subsp. Acyrthosiphon pisum (strain 5AT)).